A 576-amino-acid chain; its full sequence is Probable DNA ligase (576 aa).

Glutamate 235 lines the ATP pocket. Lysine 237 acts as the N6-AMP-lysine intermediate in catalysis. ATP-binding residues include arginine 242, arginine 257, glutamate 285, phenylalanine 324, arginine 422, and lysine 428.

It belongs to the ATP-dependent DNA ligase family. Mg(2+) is required as a cofactor.

The catalysed reaction is ATP + (deoxyribonucleotide)n-3'-hydroxyl + 5'-phospho-(deoxyribonucleotide)m = (deoxyribonucleotide)n+m + AMP + diphosphate.. DNA ligase that seals nicks in double-stranded DNA during DNA replication, DNA recombination and DNA repair. The sequence is that of Probable DNA ligase from Koribacter versatilis (strain Ellin345).